The primary structure comprises 160 residues: Small ribosomal subunit protein uS7 (160 aa).

It belongs to the universal ribosomal protein uS7 family. Part of the 30S ribosomal subunit. Contacts proteins S9 and S11.

One of the primary rRNA binding proteins, it binds directly to 16S rRNA where it nucleates assembly of the head domain of the 30S subunit. Is located at the subunit interface close to the decoding center, probably blocks exit of the E-site tRNA. The polypeptide is Small ribosomal subunit protein uS7 (Rickettsia rickettsii (strain Iowa)).